The following is a 778-amino-acid chain: MNKKILETLEFDKVKALFEPHLLTEQGLEQLRQLAPTAKADKIKQAFAEMKEMQALFVEQPHFTILSTKEIAGVCKRLEMGADLNIEEFLLLKRVLLASRELQSFYANLENVSLEELAFWFEKLHDFPQLQGNLQAFNDAGFIENFASEELARIRRKIHDSESQVRDVLQDLLKQKAQMLTEGIVASRNGRQVLPVKNTYRNKIAGVVHDISASGNTVYIEPREVVKLSEEIASLRADERYEMLRILQEISERVRPHAAEIANDAWIIGHLDLIRAKVRFIQERQAVVPQLSENQEIQLLHVCHPLVKNAVANDVHFGQDLTAIVITGPNTGGKTIMLKTLGLTQVMAQSGLPILADKGSRVGIFEEIFADIGDEQSIEQSLSTFSSHMTNIVDILGKVNQHSLLLLDELGAGTDPQEGAALAMAILEDLRLRQIKTMATTHYPELKAYGIETAFVQNASMEFDTATLRPTYRFMQGVPGRSNAFEIAKRLGLSEVIVGDASQQIDQDNDVNRIIEQLEEQTLESRKRLDNIREVEQENLKMNRALKKLYNELNREKETELNKAREQAAEIVDMALSESDQILKNLHSKSQLKPHEIIEAKAKLKKLAPEKVDLSKNKVLQKAKKKRAPKVGDDIVVLSYGQRGTLTSQLKDGRWEAQVGLIKMTLEEKEFDLVQAQQEKPVKKKQVNVVKRTSGRGPQARLDLRGKRYEEAMNELDTFIDQALLNNMAQVDIIHGIGTGVIREGVTKYLQRNKHVKSFGYAPQNAGGSGATIVTFKG.

328 to 335 serves as a coordination point for ATP; it reads GPNTGGKT. Positions 702–777 constitute a Smr domain; sequence LDLRGKRYEE…GSGATIVTFK (76 aa).

It belongs to the DNA mismatch repair MutS family. MutS2 subfamily. In terms of assembly, homodimer. Binds to stalled ribosomes, contacting rRNA.

Endonuclease that is involved in the suppression of homologous recombination and thus may have a key role in the control of bacterial genetic diversity. Its function is as follows. Acts as a ribosome collision sensor, splitting the ribosome into its 2 subunits. Detects stalled/collided 70S ribosomes which it binds and splits by an ATP-hydrolysis driven conformational change. Acts upstream of the ribosome quality control system (RQC), a ribosome-associated complex that mediates the extraction of incompletely synthesized nascent chains from stalled ribosomes and their subsequent degradation. Probably generates substrates for RQC. In Streptococcus pneumoniae serotype 19F (strain G54), this protein is Endonuclease MutS2.